The following is an 84-amino-acid chain: Small ribosomal subunit protein bS20 (84 aa).

This sequence belongs to the bacterial ribosomal protein bS20 family.

Binds directly to 16S ribosomal RNA. This is Small ribosomal subunit protein bS20 from Phocaeicola vulgatus (strain ATCC 8482 / DSM 1447 / JCM 5826 / CCUG 4940 / NBRC 14291 / NCTC 11154) (Bacteroides vulgatus).